Consider the following 257-residue polypeptide: Transmembrane protein C257L (257 aa).

A run of 2 helical transmembrane segments spans residues 123–143 (LELL…FTAL) and 163–183 (MMIF…YVLV).

The protein belongs to the asfivirus C257R family.

Its subcellular location is the host membrane. The protein resides in the virion. This is Transmembrane protein C257L from African swine fever virus (strain Badajoz 1971 Vero-adapted) (Ba71V).